We begin with the raw amino-acid sequence, 185 residues long: Elongation factor P (185 aa).

This sequence belongs to the elongation factor P family.

The protein resides in the cytoplasm. The protein operates within protein biosynthesis; polypeptide chain elongation. In terms of biological role, involved in peptide bond synthesis. Stimulates efficient translation and peptide-bond synthesis on native or reconstituted 70S ribosomes in vitro. Probably functions indirectly by altering the affinity of the ribosome for aminoacyl-tRNA, thus increasing their reactivity as acceptors for peptidyl transferase. This chain is Elongation factor P, found in Metamycoplasma arthritidis (strain 158L3-1) (Mycoplasma arthritidis).